Consider the following 361-residue polypeptide: Sensor protein VanSC (361 aa).

The next 2 membrane-spanning stretches (helical) occupy residues 16-36 and 59-79; these read FVTT…IRFI and WLFC…IYYM. In terms of domain architecture, Histidine kinase spans 144–359; that stretch reads YLAHDLRTPL…IFNVRLPKPA (216 aa). His147 carries the phosphohistidine; by autocatalysis modification. Glu252 serves as a coordination point for Mg(2+).

Post-translationally, autophosphorylated.

The protein localises to the membrane. The catalysed reaction is ATP + protein L-histidine = ADP + protein N-phospho-L-histidine.. The protein is Sensor protein VanSC of Enterococcus gallinarum.